Consider the following 81-residue polypeptide: Sulfur carrier protein TusA (81 aa).

Cysteine 19 acts as the Cysteine persulfide intermediate in catalysis.

Belongs to the sulfur carrier protein TusA family. As to quaternary structure, interacts with IscS.

It is found in the cytoplasm. The protein operates within tRNA modification. Functionally, sulfur carrier protein involved in sulfur trafficking in the cell. Part of a sulfur-relay system required for 2-thiolation during synthesis of 2-thiouridine of the modified wobble base 5-methylaminomethyl-2-thiouridine (mnm(5)s(2)U) in tRNA. Interacts with IscS and stimulates its cysteine desulfurase activity. Accepts an activated sulfur from IscS, which is then transferred to TusD, and thus determines the direction of sulfur flow from IscS to 2-thiouridine formation. Also appears to be involved in sulfur transfer for the biosynthesis of molybdopterin. The chain is Sulfur carrier protein TusA from Citrobacter koseri (strain ATCC BAA-895 / CDC 4225-83 / SGSC4696).